Consider the following 729-residue polypeptide: Fatty acid oxidation complex subunit alpha (729 aa).

Residues 1 to 189 (MLYKGDTLYL…KIGLVDGVVK (189 aa)) are enoyl-CoA hydratase/isomerase. Aspartate 296 is a substrate binding site. The segment at 311 to 729 (ETPKQAAVLG…ARAVGDLKTA (419 aa)) is 3-hydroxyacyl-CoA dehydrogenase. Residues methionine 324, aspartate 343, 400 to 402 (VVE), lysine 407, and serine 429 each bind NAD(+). Catalysis depends on histidine 450, which acts as the For 3-hydroxyacyl-CoA dehydrogenase activity. Residue asparagine 453 coordinates NAD(+). Substrate is bound by residues asparagine 500 and tyrosine 660.

The protein in the N-terminal section; belongs to the enoyl-CoA hydratase/isomerase family. This sequence in the C-terminal section; belongs to the 3-hydroxyacyl-CoA dehydrogenase family. Heterotetramer of two alpha chains (FadB) and two beta chains (FadA).

The enzyme catalyses a (3S)-3-hydroxyacyl-CoA + NAD(+) = a 3-oxoacyl-CoA + NADH + H(+). It carries out the reaction a (3S)-3-hydroxyacyl-CoA = a (2E)-enoyl-CoA + H2O. The catalysed reaction is a 4-saturated-(3S)-3-hydroxyacyl-CoA = a (3E)-enoyl-CoA + H2O. It catalyses the reaction (3S)-3-hydroxybutanoyl-CoA = (3R)-3-hydroxybutanoyl-CoA. The enzyme catalyses a (3Z)-enoyl-CoA = a 4-saturated (2E)-enoyl-CoA. It carries out the reaction a (3E)-enoyl-CoA = a 4-saturated (2E)-enoyl-CoA. Its pathway is lipid metabolism; fatty acid beta-oxidation. In terms of biological role, involved in the aerobic and anaerobic degradation of long-chain fatty acids via beta-oxidation cycle. Catalyzes the formation of 3-oxoacyl-CoA from enoyl-CoA via L-3-hydroxyacyl-CoA. It can also use D-3-hydroxyacyl-CoA and cis-3-enoyl-CoA as substrate. The sequence is that of Fatty acid oxidation complex subunit alpha from Escherichia fergusonii (strain ATCC 35469 / DSM 13698 / CCUG 18766 / IAM 14443 / JCM 21226 / LMG 7866 / NBRC 102419 / NCTC 12128 / CDC 0568-73).